The chain runs to 141 residues: MTVKVDKNYEQLLDRLYDRLPDKAQKSGQQNLPNLIVLQVGNTTIIRNFSEYCDRIRREDKLCMRYLLKELAAPGSLGENGQLVIQGKFSSQVVTMLMERFLKMYVQCSTCRSFDTILKRDKKVWIISCLACGAQTPVKQF.

Belongs to the eIF-2-beta/eIF-5 family. In terms of assembly, heterotrimer composed of an alpha, a beta and a gamma chain.

Functionally, eIF-2 functions in the early steps of protein synthesis by forming a ternary complex with GTP and initiator tRNA. The sequence is that of Translation initiation factor 2 subunit beta from Sulfolobus acidocaldarius (strain ATCC 33909 / DSM 639 / JCM 8929 / NBRC 15157 / NCIMB 11770).